The sequence spans 358 residues: Glycerophosphodiester phosphodiesterase, periplasmic (358 aa).

An N-terminal signal peptide occupies residues 1–25; it reads MKLTLKNLSMAIMMSTIVMGSSAMA. In terms of domain architecture, GP-PDE spans 31 to 355; sequence KIVIAHRGAS…DFPDKAVKFL (325 aa). Catalysis depends on histidine 36, which acts as the Proton acceptor. Residues glutamate 63 and aspartate 65 each contribute to the Ca(2+) site. Histidine 78 (proton donor) is an active-site residue. Glutamate 171 contacts Ca(2+).

The protein belongs to the glycerophosphoryl diester phosphodiesterase family. In terms of assembly, homodimer. Ca(2+) is required as a cofactor.

It is found in the periplasm. The enzyme catalyses a sn-glycero-3-phosphodiester + H2O = an alcohol + sn-glycerol 3-phosphate + H(+). Glycerophosphodiester phosphodiesterase hydrolyzes glycerophosphodiesters into glycerol-3-phosphate (G3P) and the corresponding alcohol. The polypeptide is Glycerophosphodiester phosphodiesterase, periplasmic (glpQ) (Escherichia coli (strain K12)).